A 106-amino-acid polypeptide reads, in one-letter code: Large ribosomal subunit protein uL24 (106 aa).

Belongs to the universal ribosomal protein uL24 family. In terms of assembly, part of the 50S ribosomal subunit.

Functionally, one of two assembly initiator proteins, it binds directly to the 5'-end of the 23S rRNA, where it nucleates assembly of the 50S subunit. One of the proteins that surrounds the polypeptide exit tunnel on the outside of the subunit. The sequence is that of Large ribosomal subunit protein uL24 from Rhodospirillum rubrum (strain ATCC 11170 / ATH 1.1.1 / DSM 467 / LMG 4362 / NCIMB 8255 / S1).